The sequence spans 391 residues: Phosphoglycerate kinase (391 aa).

Substrate contacts are provided by residues 21-23 (DFN), R36, 59-62 (HLGR), R113, and R146. Residues K197, E319, and 345 to 348 (GGDT) contribute to the ATP site.

It belongs to the phosphoglycerate kinase family. In terms of assembly, monomer.

The protein localises to the cytoplasm. It carries out the reaction (2R)-3-phosphoglycerate + ATP = (2R)-3-phospho-glyceroyl phosphate + ADP. It functions in the pathway carbohydrate degradation; glycolysis; pyruvate from D-glyceraldehyde 3-phosphate: step 2/5. In Methylococcus capsulatus (strain ATCC 33009 / NCIMB 11132 / Bath), this protein is Phosphoglycerate kinase.